We begin with the raw amino-acid sequence, 218 residues long: Pyridoxine/pyridoxamine 5'-phosphate oxidase (218 aa).

Substrate-binding positions include 14–17 (RREY) and Lys72. FMN contacts are provided by residues 67 to 72 (RIVLLK), 82 to 83 (YT), Arg88, Lys89, and Gln111. Tyr129, Arg133, and Ser137 together coordinate substrate. Residues 146-147 (QS) and Trp191 each bind FMN. 197-199 (RLH) serves as a coordination point for substrate. Arg201 is a binding site for FMN.

This sequence belongs to the pyridoxamine 5'-phosphate oxidase family. Homodimer. FMN is required as a cofactor.

The enzyme catalyses pyridoxamine 5'-phosphate + O2 + H2O = pyridoxal 5'-phosphate + H2O2 + NH4(+). It carries out the reaction pyridoxine 5'-phosphate + O2 = pyridoxal 5'-phosphate + H2O2. It functions in the pathway cofactor metabolism; pyridoxal 5'-phosphate salvage; pyridoxal 5'-phosphate from pyridoxamine 5'-phosphate: step 1/1. The protein operates within cofactor metabolism; pyridoxal 5'-phosphate salvage; pyridoxal 5'-phosphate from pyridoxine 5'-phosphate: step 1/1. Its function is as follows. Catalyzes the oxidation of either pyridoxine 5'-phosphate (PNP) or pyridoxamine 5'-phosphate (PMP) into pyridoxal 5'-phosphate (PLP). The chain is Pyridoxine/pyridoxamine 5'-phosphate oxidase from Escherichia coli O127:H6 (strain E2348/69 / EPEC).